Here is a 268-residue protein sequence, read N- to C-terminus: Calpain small subunit 1 (268 aa).

An N-acetylmethionine modification is found at methionine 1. The residue at position 6 (serine 6) is a Phosphoserine. An EF-hand 1; atypical domain is found at 96 to 130 (EEVRQFRKLFVQLAGDDMEVSATELMNILNKVVTR). Residues alanine 109, aspartate 112, glutamate 114, glutamate 119, aspartate 137, aspartate 152, aspartate 154, threonine 156, lysine 158, and glutamate 163 each contribute to the Ca(2+) site. 4 consecutive EF-hand domains span residues 139-172 (FGID…NNIK), 169-204 (NNIK…AGFH), 205-233 (LNEH…ISCL), and 234-268 (VRLD…TMYS). Lysine 179 carries the N6-acetyllysine modification. Ca(2+) is bound by residues aspartate 182, aspartate 184, serine 186, threonine 188, glutamate 193, and aspartate 225.

As to quaternary structure, homodimer or heterodimer of a large (catalytic) and a small (regulatory) subunit. In presence of calcium, the heterodimer dissociates.

It localises to the cytoplasm. Its subcellular location is the cell membrane. Its function is as follows. Regulatory subunit of the calcium-regulated non-lysosomal thiol-protease which catalyzes limited proteolysis of substrates involved in cytoskeletal remodeling and signal transduction. Essential for embryonic development. The polypeptide is Calpain small subunit 1 (Capns1) (Mus musculus (Mouse)).